A 486-amino-acid polypeptide reads, in one-letter code: Glutamyl-tRNA(Gln) amidotransferase subunit A (486 aa).

Active-site charge relay system residues include lysine 76 and serine 151. Serine 175 acts as the Acyl-ester intermediate in catalysis.

Belongs to the amidase family. GatA subfamily. Heterotrimer of A, B and C subunits.

It catalyses the reaction L-glutamyl-tRNA(Gln) + L-glutamine + ATP + H2O = L-glutaminyl-tRNA(Gln) + L-glutamate + ADP + phosphate + H(+). Its function is as follows. Allows the formation of correctly charged Gln-tRNA(Gln) through the transamidation of misacylated Glu-tRNA(Gln) in organisms which lack glutaminyl-tRNA synthetase. The reaction takes place in the presence of glutamine and ATP through an activated gamma-phospho-Glu-tRNA(Gln). The chain is Glutamyl-tRNA(Gln) amidotransferase subunit A from Nitrosomonas europaea (strain ATCC 19718 / CIP 103999 / KCTC 2705 / NBRC 14298).